Here is a 451-residue protein sequence, read N- to C-terminus: Bifunctional protein GlmU (451 aa).

The tract at residues 1–236 (MDQTPSYSPP…YEELRGINSK (236 aa)) is pyrophosphorylase. UDP-N-acetyl-alpha-D-glucosamine is bound by residues 17 to 20 (LAAG), Lys-31, Gln-79, 84 to 85 (GT), 105 to 107 (YGD), Gly-144, Glu-162, Asn-177, and Asn-234. Asp-107 contributes to the Mg(2+) binding site. Asn-234 is a binding site for Mg(2+). Residues 237 to 257 (VELAEAEATVQIVLRRKALEN) form a linker region. The N-acetyltransferase stretch occupies residues 258 to 451 (GVTMTAPETV…EIRRQLKGSV (194 aa)). Arg-323 and Lys-341 together coordinate UDP-N-acetyl-alpha-D-glucosamine. His-353 serves as the catalytic Proton acceptor. Residues Tyr-356 and Asn-367 each contribute to the UDP-N-acetyl-alpha-D-glucosamine site. Residues Ala-370, 376–377 (NY), Ser-395, Ala-413, and Arg-430 contribute to the acetyl-CoA site.

It in the N-terminal section; belongs to the N-acetylglucosamine-1-phosphate uridyltransferase family. The protein in the C-terminal section; belongs to the transferase hexapeptide repeat family. In terms of assembly, homotrimer. The cofactor is Mg(2+).

It is found in the cytoplasm. The enzyme catalyses alpha-D-glucosamine 1-phosphate + acetyl-CoA = N-acetyl-alpha-D-glucosamine 1-phosphate + CoA + H(+). It carries out the reaction N-acetyl-alpha-D-glucosamine 1-phosphate + UTP + H(+) = UDP-N-acetyl-alpha-D-glucosamine + diphosphate. Its pathway is nucleotide-sugar biosynthesis; UDP-N-acetyl-alpha-D-glucosamine biosynthesis; N-acetyl-alpha-D-glucosamine 1-phosphate from alpha-D-glucosamine 6-phosphate (route II): step 2/2. It participates in nucleotide-sugar biosynthesis; UDP-N-acetyl-alpha-D-glucosamine biosynthesis; UDP-N-acetyl-alpha-D-glucosamine from N-acetyl-alpha-D-glucosamine 1-phosphate: step 1/1. It functions in the pathway bacterial outer membrane biogenesis; LPS lipid A biosynthesis. In terms of biological role, catalyzes the last two sequential reactions in the de novo biosynthetic pathway for UDP-N-acetylglucosamine (UDP-GlcNAc). The C-terminal domain catalyzes the transfer of acetyl group from acetyl coenzyme A to glucosamine-1-phosphate (GlcN-1-P) to produce N-acetylglucosamine-1-phosphate (GlcNAc-1-P), which is converted into UDP-GlcNAc by the transfer of uridine 5-monophosphate (from uridine 5-triphosphate), a reaction catalyzed by the N-terminal domain. This Granulibacter bethesdensis (strain ATCC BAA-1260 / CGDNIH1) protein is Bifunctional protein GlmU.